A 103-amino-acid chain; its full sequence is N(4)-acetylcytidine amidohydrolase (103 aa).

One can recognise an ASCH domain in the interval 6–101; the sequence is ITFFQRFQDD…QTQFYVIEFK (96 aa). Residue K21 is the Proton acceptor of the active site. T24 functions as the Nucleophile in the catalytic mechanism. Catalysis depends on E74, which acts as the Proton donor.

It belongs to the N(4)-acetylcytidine amidohydrolase family.

It catalyses the reaction N(4)-acetylcytidine + H2O = cytidine + acetate + H(+). The catalysed reaction is N(4)-acetyl-2'-deoxycytidine + H2O = 2'-deoxycytidine + acetate + H(+). It carries out the reaction N(4)-acetylcytosine + H2O = cytosine + acetate + H(+). In terms of biological role, catalyzes the hydrolysis of N(4)-acetylcytidine (ac4C). The sequence is that of N(4)-acetylcytidine amidohydrolase (yqfB) from Escherichia coli (strain SE11).